The primary structure comprises 248 residues: tRNA pseudouridine synthase A (248 aa).

The active-site Nucleophile is D53. Y111 is a substrate binding site.

It belongs to the tRNA pseudouridine synthase TruA family. In terms of assembly, homodimer.

The catalysed reaction is uridine(38/39/40) in tRNA = pseudouridine(38/39/40) in tRNA. Functionally, formation of pseudouridine at positions 38, 39 and 40 in the anticodon stem and loop of transfer RNAs. The sequence is that of tRNA pseudouridine synthase A from Streptococcus thermophilus (strain CNRZ 1066).